Here is a 300-residue protein sequence, read N- to C-terminus: tRNA uridine(34) hydroxylase (300 aa).

The Rhodanese domain occupies 128-222 (ADPEVIVVDT…YLEDVPQAQS (95 aa)). Cys182 (cysteine persulfide intermediate) is an active-site residue.

The protein belongs to the TrhO family.

It carries out the reaction uridine(34) in tRNA + AH2 + O2 = 5-hydroxyuridine(34) in tRNA + A + H2O. Functionally, catalyzes oxygen-dependent 5-hydroxyuridine (ho5U) modification at position 34 in tRNAs. This Deinococcus radiodurans (strain ATCC 13939 / DSM 20539 / JCM 16871 / CCUG 27074 / LMG 4051 / NBRC 15346 / NCIMB 9279 / VKM B-1422 / R1) protein is tRNA uridine(34) hydroxylase.